A 347-amino-acid polypeptide reads, in one-letter code: Protein RecA (347 aa).

65–72 lines the ATP pocket; it reads GPESSGKT.

The protein belongs to the RecA family.

Its subcellular location is the cytoplasm. In terms of biological role, can catalyze the hydrolysis of ATP in the presence of single-stranded DNA, the ATP-dependent uptake of single-stranded DNA by duplex DNA, and the ATP-dependent hybridization of homologous single-stranded DNAs. It interacts with LexA causing its activation and leading to its autocatalytic cleavage. The sequence is that of Protein RecA from Stutzerimonas stutzeri (Pseudomonas stutzeri).